We begin with the raw amino-acid sequence, 57 residues long: YPANEGCLLPMKVGPCRAAWPSYYYNSKSEKCEEFTYGGCDANANNFQTEEECKKAC.

In terms of domain architecture, BPTI/Kunitz inhibitor spans 7–57 (CLLPMKVGPCRAAWPSYYYNSKSEKCEEFTYGGCDANANNFQTEEECKKAC). 3 cysteine pairs are disulfide-bonded: cysteine 7-cysteine 57, cysteine 16-cysteine 40, and cysteine 32-cysteine 53.

This sequence belongs to the venom Kunitz-type family. Sea anemone type 2 potassium channel toxin subfamily. Expressed by acrorhagi.

It is found in the secreted. It localises to the nematocyst. Serine protease inhibitor that is strongly active against trypsin (700 IU/mg) and moderately active against plasmin. The protein is PI-actitoxin-Aeq3c of Actinia equina (Beadlet anemone).